Consider the following 148-residue polypeptide: Small ribosomal subunit protein eS19 (148 aa).

This sequence belongs to the eukaryotic ribosomal protein eS19 family. In terms of assembly, part of the 30S ribosomal subunit.

In terms of biological role, may be involved in maturation of the 30S ribosomal subunit. The sequence is that of Small ribosomal subunit protein eS19 from Methanocaldococcus jannaschii (strain ATCC 43067 / DSM 2661 / JAL-1 / JCM 10045 / NBRC 100440) (Methanococcus jannaschii).